The chain runs to 188 residues: ATP synthase subunit b (188 aa).

A helical transmembrane segment spans residues 5 to 25 (MLLIFMMIVMIASSAMAAEAE).

It belongs to the ATPase B chain family. In terms of assembly, F-type ATPases have 2 components, F(1) - the catalytic core - and F(0) - the membrane proton channel. F(1) has five subunits: alpha(3), beta(3), gamma(1), delta(1), epsilon(1). F(0) has three main subunits: a(1), b(2) and c(10-14). The alpha and beta chains form an alternating ring which encloses part of the gamma chain. F(1) is attached to F(0) by a central stalk formed by the gamma and epsilon chains, while a peripheral stalk is formed by the delta and b chains.

It localises to the cell inner membrane. Functionally, f(1)F(0) ATP synthase produces ATP from ADP in the presence of a proton or sodium gradient. F-type ATPases consist of two structural domains, F(1) containing the extramembraneous catalytic core and F(0) containing the membrane proton channel, linked together by a central stalk and a peripheral stalk. During catalysis, ATP synthesis in the catalytic domain of F(1) is coupled via a rotary mechanism of the central stalk subunits to proton translocation. Component of the F(0) channel, it forms part of the peripheral stalk, linking F(1) to F(0). The chain is ATP synthase subunit b from Thermodesulfovibrio yellowstonii (strain ATCC 51303 / DSM 11347 / YP87).